We begin with the raw amino-acid sequence, 133 residues long: Small ribosomal subunit protein uS8 (133 aa).

Belongs to the universal ribosomal protein uS8 family. Part of the 30S ribosomal subunit. Contacts proteins S5 and S12.

In terms of biological role, one of the primary rRNA binding proteins, it binds directly to 16S rRNA central domain where it helps coordinate assembly of the platform of the 30S subunit. This Lachnoclostridium phytofermentans (strain ATCC 700394 / DSM 18823 / ISDg) (Clostridium phytofermentans) protein is Small ribosomal subunit protein uS8.